Consider the following 523-residue polypeptide: GMP synthase [glutamine-hydrolyzing] (523 aa).

The Glutamine amidotransferase type-1 domain occupies 8-205 (KILILDFGSQ…VVGICGCECK (198 aa)). Residue C85 is the Nucleophile of the active site. Residues H179 and E181 contribute to the active site. Residues 206–398 (WTAENIIERR…LGLPAEMLNR (193 aa)) form the GMPS ATP-PPase domain. 233–239 (SGGVDSS) contributes to the ATP binding site.

Homodimer.

It catalyses the reaction XMP + L-glutamine + ATP + H2O = GMP + L-glutamate + AMP + diphosphate + 2 H(+). Its pathway is purine metabolism; GMP biosynthesis; GMP from XMP (L-Gln route): step 1/1. Functionally, catalyzes the synthesis of GMP from XMP. The chain is GMP synthase [glutamine-hydrolyzing] from Actinobacillus pleuropneumoniae serotype 5b (strain L20).